Reading from the N-terminus, the 4655-residue chain is Low-density lipoprotein receptor-related protein 2 (4655 aa).

Positions methionine 1 to glycine 25 are cleaved as a signal peptide. Residues glutamine 26–threonine 4423 are Extracellular-facing. 7 LDL-receptor class A domains span residues glutamate 27–alanine 63, threonine 66–serine 104, threonine 107–glutamine 143, threonine 146–threonine 180, isoleucine 182–asparagine 218, threonine 221–glutamate 257, and lysine 265–serine 308. 21 disulfides stabilise this stretch: cysteine 28-cysteine 40, cysteine 35-cysteine 53, cysteine 47-cysteine 62, cysteine 67-cysteine 80, cysteine 74-cysteine 93, cysteine 87-cysteine 103, cysteine 108-cysteine 120, cysteine 115-cysteine 133, cysteine 127-cysteine 142, cysteine 147-cysteine 157, cysteine 152-cysteine 170, cysteine 164-cysteine 179, cysteine 183-cysteine 195, cysteine 190-cysteine 208, cysteine 202-cysteine 217, cysteine 222-cysteine 234, cysteine 229-cysteine 247, cysteine 241-cysteine 256, cysteine 266-cysteine 279, cysteine 273-cysteine 292, and cysteine 286-cysteine 307. 2 N-linked (GlcNAc...) asparagine glycosylation sites follow: asparagine 159 and asparagine 178. Asparagine 299, asparagine 300, asparagine 341, asparagine 388, and asparagine 463 each carry an N-linked (GlcNAc...) asparagine glycan. LDL-receptor class B repeat units lie at residues glutamine 436–asparagine 478, asparagine 479–valine 521, glycine 522–serine 568, lysine 569–glutamine 613, serine 753–serine 795, lysine 796–alanine 837, glycine 838–alanine 881, and serine 882–histidine 925. An N-linked (GlcNAc...) asparagine glycan is attached at asparagine 866. The 37-residue stretch at glutamine 1025–glycine 1061 folds into the LDL-receptor class A 8 domain. Disulfide bonds link cysteine 1026/cysteine 1038, cysteine 1033/cysteine 1051, and cysteine 1045/cysteine 1060. Asparagine 1064 is a glycosylation site (N-linked (GlcNAc...) asparagine). LDL-receptor class A domains lie at threonine 1066–proline 1102, serine 1108–asparagine 1144, threonine 1148–valine 1184, asparagine 1186–proline 1223, methionine 1229–valine 1267, threonine 1270–proline 1306, and aspartate 1304–asparagine 1349. Disulfide bonds link cysteine 1067–cysteine 1079, cysteine 1074–cysteine 1092, cysteine 1086–cysteine 1101, cysteine 1109–cysteine 1121, cysteine 1116–cysteine 1134, and cysteine 1128–cysteine 1143. The Ca(2+) site is built by tryptophan 1126, aspartate 1129, aspartate 1131, aspartate 1133, aspartate 1139, and glutamate 1140. Asparagine 1144 is a glycosylation site (N-linked (GlcNAc...) asparagine). Cystine bridges form between cysteine 1149–cysteine 1161, cysteine 1156–cysteine 1174, and cysteine 1168–cysteine 1183. The N-linked (GlcNAc...) asparagine glycan is linked to asparagine 1186. Disulfide bonds link cysteine 1187–cysteine 1200, cysteine 1194–cysteine 1213, cysteine 1207–cysteine 1222, cysteine 1230–cysteine 1243, cysteine 1237–cysteine 1256, cysteine 1250–cysteine 1266, cysteine 1271–cysteine 1283, cysteine 1278–cysteine 1296, cysteine 1290–cysteine 1305, cysteine 1305–cysteine 1325, cysteine 1312–cysteine 1338, and cysteine 1332–cysteine 1348. Ca(2+)-binding residues include aspartate 1208, valine 1210, aspartate 1212, aspartate 1218, and glutamate 1219. N-linked (GlcNAc...) asparagine glycosylation is found at asparagine 1327, asparagine 1340, and asparagine 1383. An EGF-like 1; calcium-binding domain is found at aspartate 1390–lysine 1429. 3 cysteine pairs are disulfide-bonded: cysteine 1394–cysteine 1404, cysteine 1400–cysteine 1413, and cysteine 1415–cysteine 1428. N-linked (GlcNAc...) asparagine glycosylation is found at asparagine 1464, asparagine 1496, and asparagine 1550. 5 LDL-receptor class B repeats span residues glycine 1478–glycine 1520, arginine 1521–methionine 1563, histidine 1566–asparagine 1609, arginine 1610–serine 1654, and valine 1655–serine 1695. The N-linked (GlcNAc...) asparagine glycan is linked to asparagine 1675. The EGF-like 2 domain occupies serine 1700–leucine 1741. 3 cysteine pairs are disulfide-bonded: cysteine 1704–cysteine 1713, cysteine 1709–cysteine 1725, and cysteine 1727–cysteine 1740. LDL-receptor class B repeat units follow at residues glutamine 1790 to serine 1832, arginine 1833 to arginine 1882, glycine 1883 to glutamate 1930, glutamine 1931 to phenylalanine 1972, and leucine 1973 to arginine 2013. Residue asparagine 1810 is glycosylated (N-linked (GlcNAc...) asparagine). Asparagine 2055 is a glycosylation site (N-linked (GlcNAc...) asparagine). LDL-receptor class B repeat units follow at residues glycine 2107–alanine 2156, glycine 2157–asparagine 2201, arginine 2202–aspartate 2245, glycine 2246–serine 2289, aspartate 2431–threonine 2477, arginine 2478–glutamine 2518, glycine 2519–glutamate 2562, aspartate 2563–tyrosine 2604, and isoleucine 2605–asparagine 2646. Asparagine 2177 and asparagine 2224 each carry an N-linked (GlcNAc...) asparagine glycan. 2 N-linked (GlcNAc...) asparagine glycosylation sites follow: asparagine 2499 and asparagine 2547. 10 LDL-receptor class A domains span residues arginine 2699–alanine 2737, threonine 2740–leucine 2776, aspartate 2779–proline 2818, threonine 2821–threonine 2860, threonine 2863–glycine 2900, threonine 2905–glutamine 2944, asparagine 2947–threonine 2989, threonine 2992–leucine 3028, threonine 3031–histidine 3069, and threonine 3074–glycine 3110. Cystine bridges form between cysteine 2700–cysteine 2712, cysteine 2707–cysteine 2725, cysteine 2719–cysteine 2736, cysteine 2741–cysteine 2753, cysteine 2748–cysteine 2766, cysteine 2760–cysteine 2775, cysteine 2780–cysteine 2793, cysteine 2788–cysteine 2806, cysteine 2800–cysteine 2817, cysteine 2822–cysteine 2835, cysteine 2829–cysteine 2848, cysteine 2842–cysteine 2859, cysteine 2864–cysteine 2876, cysteine 2871–cysteine 2889, cysteine 2883–cysteine 2899, cysteine 2906–cysteine 2918, cysteine 2913–cysteine 2931, and cysteine 2925–cysteine 2943. An N-linked (GlcNAc...) asparagine glycan is attached at asparagine 2781. Asparagine 2809 and asparagine 2810 each carry an N-linked (GlcNAc...) asparagine glycan. N-linked (GlcNAc...) asparagine glycosylation occurs at asparagine 2947. 18 disulfide bridges follow: cysteine 2948/cysteine 2965, cysteine 2955/cysteine 2978, cysteine 2972/cysteine 2988, cysteine 2993/cysteine 3005, cysteine 3000/cysteine 3018, cysteine 3012/cysteine 3027, cysteine 3032/cysteine 3044, cysteine 3039/cysteine 3057, cysteine 3051/cysteine 3068, cysteine 3075/cysteine 3087, cysteine 3082/cysteine 3100, cysteine 3094/cysteine 3109, cysteine 3114/cysteine 3126, cysteine 3122/cysteine 3135, cysteine 3137/cysteine 3150, cysteine 3156/cysteine 3167, cysteine 3163/cysteine 3176, and cysteine 3178/cysteine 3191. Asparagine 2987 carries an N-linked (GlcNAc...) asparagine glycan. In terms of domain architecture, EGF-like 3 spans glycine 3110 to valine 3151. An N-linked (GlcNAc...) asparagine glycan is attached at asparagine 3125. One can recognise an EGF-like 4; calcium-binding domain in the interval aspartate 3152 to arginine 3192. Residues asparagine 3211, asparagine 3257, asparagine 3315, and asparagine 3355 are each glycosylated (N-linked (GlcNAc...) asparagine). LDL-receptor class B repeat units follow at residues lysine 3239–serine 3281, arginine 3282–arginine 3324, glycine 3333–asparagine 3376, aspartate 3377–threonine 3419, and isoleucine 3420–tyrosine 3460. The N-linked (GlcNAc...) asparagine glycan is linked to asparagine 3446. LDL-receptor class A domains lie at methionine 3511–proline 3549, phenylalanine 3552–glutamate 3590, histidine 3593–alanine 3631, threonine 3634–methionine 3672, leucine 3677–glutamate 3715, threonine 3718–alanine 3755, glutamate 3758–glutamate 3794, threonine 3797–proline 3833, tyrosine 3841–leucine 3879, proline 3882–arginine 3921, and proline 3927–asparagine 3963. Cystine bridges form between cysteine 3512-cysteine 3525, cysteine 3519-cysteine 3538, cysteine 3532-cysteine 3548, cysteine 3553-cysteine 3565, cysteine 3560-cysteine 3578, cysteine 3572-cysteine 3589, cysteine 3594-cysteine 3606, cysteine 3601-cysteine 3619, cysteine 3613-cysteine 3630, cysteine 3635-cysteine 3647, cysteine 3642-cysteine 3660, cysteine 3654-cysteine 3671, cysteine 3678-cysteine 3692, cysteine 3686-cysteine 3705, cysteine 3699-cysteine 3714, cysteine 3719-cysteine 3732, cysteine 3727-cysteine 3745, cysteine 3739-cysteine 3754, cysteine 3759-cysteine 3771, cysteine 3766-cysteine 3784, cysteine 3778-cysteine 3793, cysteine 3798-cysteine 3810, cysteine 3805-cysteine 3823, cysteine 3817-cysteine 3832, cysteine 3842-cysteine 3854, cysteine 3849-cysteine 3867, cysteine 3861-cysteine 3878, cysteine 3883-cysteine 3896, cysteine 3891-cysteine 3909, cysteine 3903-cysteine 3920, cysteine 3928-cysteine 3940, cysteine 3935-cysteine 3953, and cysteine 3947-cysteine 3962. Asparagine 3564 carries an N-linked (GlcNAc...) asparagine glycan. N-linked (GlcNAc...) asparagine glycosylation is present at asparagine 3680. N-linked (GlcNAc...) asparagine glycosylation is present at asparagine 3978. The EGF-like 5; calcium-binding domain maps to aspartate 4007 to alanine 4048. 3 disulfide bridges follow: cysteine 4011-cysteine 4021, cysteine 4017-cysteine 4030, and cysteine 4032-cysteine 4047. A glycan (N-linked (GlcNAc...) asparagine) is linked at asparagine 4068. LDL-receptor class B repeat units lie at residues arginine 4154–leucine 4196, glycine 4197–asparagine 4240, and aspartate 4242–glutamine 4283. The N-linked (GlcNAc...) asparagine glycan is linked to asparagine 4327. Residues leucine 4377–glutamate 4411 enclose the EGF-like 6 domain. Cystine bridges form between cysteine 4381-cysteine 4389, cysteine 4383-cysteine 4399, and cysteine 4401-cysteine 4410. The chain crosses the membrane as a helical span at residues alanine 4424–phenylalanine 4446. Over histidine 4447–valine 4655 the chain is Cytoplasmic. The short motif at serine 4453–proline 4462 is the SH3-binding element. Residues proline 4456–leucine 4461 carry the PxLPxI/L motif 1; mediates interaction with ANKRA2 motif. Residues proline 4459 to leucine 4464 carry the PxLPxI/L motif 2; mediates interaction with ANKRA2 motif. Phosphoserine occurs at positions 4463 and 4466. Positions phenylalanine 4521–tyrosine 4526 match the Endocytosis signal motif. The tract at residues lysine 4550 to glycine 4574 is disordered. Polar residues predominate over residues threonine 4565 to glycine 4574. Serine 4569 carries the phosphoserine modification. Positions glutamine 4589–glutamate 4602 are interaction with DAB2. Positions asparagine 4595–tyrosine 4598 match the NPXY motif motif. The SH2-binding signature appears at tyrosine 4598–methionine 4601. Residues methionine 4601–valine 4655 form a disordered region. An SH3-binding motif is present at residues alanine 4611 to lysine 4622. A compositionally biased stretch (pro residues) spans threonine 4612–lysine 4624. A Phosphoserine modification is found at serine 4616. Position 4632 is a phosphothreonine (threonine 4632). Serine 4653 is modified (phosphoserine).

It belongs to the LDLR family. Binds plasminogen, extracellular matrix components, plasminogen activator-plasminogen activator inhibitor type I complex, apolipoprotein E-enriched beta-VLDL, lipoprotein lipase, lactoferrin, CLU/clusterin and calcium. Forms a multimeric complex together with LRPAP1. Interacts (via PxLPxI/L motif) with ANKRA2 (via ankyrin repeats). Interacts with LRP2BP. Interacts (via NPXY motif) with DAB2; the interaction is not affected by tyrosine phosphorylation of the NPXY motif. Interacts with MB. Interacts with BMP4. Interacts with the Sonic hedgehog protein N-product which is the active product of SHH. Interacts with CST3 in a calcium-dependent manner. Interacts with the vitamin-D binding protein GC/DBP. Interacts with sex hormone-binding protein SHBG. Interacts with angiotensin-2. Also interacts with angiotensin 1-7. Interacts with APOM. Interacts with selenoprotein SEPP1. Interacts with LEP. Interacts with ALB. Interacts with the antiapoptotic protein BIRC5/survivin. Interacts with matrix metalloproteinase MMP2 in complex with metalloproteinase inhibitor TIMP1. In neurons, forms a trimeric complex with APP and APPB1/FE65. Interacts with LDLRAP1/ARH; mediates trafficking of LRP2 to the endocytic recycling compartment. Does not interact with beta-amyloid protein 40 alone but interacts with the complex composed of beta-amyloid protein 40 and CLU/APOJ. Interacts with MDK. A fraction undergoes proteolytic cleavage of the extracellular domain at the cell membrane to generate a cytoplasmic tail fragment. This is internalized into the early endosome from where it trafficks in an LDLRAP1/ARH-dependent manner to the endocytic recycling compartment (ERC). In the ERC, it is further cleaved by gamma-secretase to release a fragment which translocates to the nucleus and mediates transcriptional repression. In terms of processing, N-glycosylation is required for ligand binding. As to expression, expressed in first and third trimester cytotrophoblasts in the placenta (at protein level). Absorptive epithelia, including renal proximal tubules.

It localises to the apical cell membrane. It is found in the endosome lumen. The protein resides in the membrane. Its subcellular location is the coated pit. The protein localises to the cell projection. It localises to the dendrite. It is found in the axon. In terms of biological role, multiligand endocytic receptor. Acts together with CUBN to mediate endocytosis of high-density lipoproteins. Mediates receptor-mediated uptake of polybasic drugs such as aprotinin, aminoglycosides and polymyxin B. In the kidney, mediates the tubular uptake and clearance of leptin. Also mediates transport of leptin across the blood-brain barrier through endocytosis at the choroid plexus epithelium. Endocytosis of leptin in neuronal cells is required for hypothalamic leptin signaling and leptin-mediated regulation of feeding and body weight. Mediates endocytosis and subsequent lysosomal degradation of CST3 in kidney proximal tubule cells. Mediates renal uptake of 25-hydroxyvitamin D3 in complex with the vitamin D3 transporter GC/DBP. Mediates renal uptake of metallothionein-bound heavy metals. Together with CUBN, mediates renal reabsorption of myoglobin. Mediates renal uptake and subsequent lysosomal degradation of APOM. Plays a role in kidney selenium homeostasis by mediating renal endocytosis of selenoprotein SEPP1. Mediates renal uptake of the antiapoptotic protein BIRC5/survivin which may be important for functional integrity of the kidney. Mediates renal uptake of matrix metalloproteinase MMP2 in complex with metalloproteinase inhibitor TIMP1. Mediates endocytosis of Sonic hedgehog protein N-product (ShhN), the active product of SHH. Also mediates ShhN transcytosis. In the embryonic neuroepithelium, mediates endocytic uptake and degradation of BMP4, is required for correct SHH localization in the ventral neural tube and plays a role in patterning of the ventral telencephalon. Required at the onset of neurulation to sequester SHH on the apical surface of neuroepithelial cells of the rostral diencephalon ventral midline and to control PTCH1-dependent uptake and intracellular trafficking of SHH. During neurulation, required in neuroepithelial cells for uptake of folate bound to the folate receptor FOLR1 which is necessary for neural tube closure. In the adult brain, negatively regulates BMP signaling in the subependymal zone which enables neurogenesis to proceed. In astrocytes, mediates endocytosis of ALB which is required for the synthesis of the neurotrophic factor oleic acid. Involved in neurite branching. During optic nerve development, required for SHH-mediated migration and proliferation of oligodendrocyte precursor cells. Mediates endocytic uptake and clearance of SHH in the retinal margin which protects retinal progenitor cells from mitogenic stimuli and keeps them quiescent. Plays a role in reproductive organ development by mediating uptake in reproductive tissues of androgen and estrogen bound to the sex hormone binding protein SHBG. Mediates endocytosis of angiotensin-2. Also mediates endocytosis of angiotensis 1-7. Binds to the complex composed of beta-amyloid protein 40 and CLU/APOJ and mediates its endocytosis and lysosomal degradation. Required for embryonic heart development. Required for normal hearing, possibly through interaction with estrogen in the inner ear. In Homo sapiens (Human), this protein is Low-density lipoprotein receptor-related protein 2.